The sequence spans 161 residues: Small ribosomal subunit protein uS9 (161 aa).

It belongs to the universal ribosomal protein uS9 family.

The sequence is that of Small ribosomal subunit protein uS9 from Rickettsia typhi (strain ATCC VR-144 / Wilmington).